The sequence spans 337 residues: Anthranilate phosphoribosyltransferase (337 aa).

5-phospho-alpha-D-ribose 1-diphosphate is bound by residues glycine 82, 85 to 86, threonine 90, 92 to 95, 110 to 118, and serine 122; these read GD, NIST, and KHGGRSVSS. Glycine 82 contributes to the anthranilate binding site. Serine 94 is a Mg(2+) binding site. An anthranilate-binding site is contributed by arginine 168. Mg(2+) contacts are provided by aspartate 226 and glutamate 227.

Belongs to the anthranilate phosphoribosyltransferase family. As to quaternary structure, homodimer. The cofactor is Mg(2+).

The catalysed reaction is N-(5-phospho-beta-D-ribosyl)anthranilate + diphosphate = 5-phospho-alpha-D-ribose 1-diphosphate + anthranilate. It participates in amino-acid biosynthesis; L-tryptophan biosynthesis; L-tryptophan from chorismate: step 2/5. Catalyzes the transfer of the phosphoribosyl group of 5-phosphorylribose-1-pyrophosphate (PRPP) to anthranilate to yield N-(5'-phosphoribosyl)-anthranilate (PRA). This chain is Anthranilate phosphoribosyltransferase, found in Francisella tularensis subsp. tularensis (strain WY96-3418).